The sequence spans 400 residues: MTERNIHVQPASGLAVEDQDIEVVERKGIGHPDTICDGIAETVSRALAQTYIDRFGTVLHYNTDETQLVAGTAAPAYGGGEVLEPIYILVVGRATKKFDGERIPAESIALRAARDYLDEQFPHLDLGSDVIVDVQFGEGSGDLQTVFGEEAAIPMANDTSYGVGHAPLTETEQIVRNTEQKLTGEYAESNPVVGQDVKVMGKREGDHIDVTVAVAMVDEHVPDLDAYKTAVSDVRAFVTDLAEEYTDRDVTVHVNTADDYDAESIYLTTTGTSAEQGDDGSVGRGNRANGLITPNRPMSMEATSGKNPVNHIGKIYNLLSTEIAQSVANEVDGIRQVQMRLLSQIGSPIDEPHVADATVVTEDGVAVGDVEADIQATIDDELADVTDITRQVIEGDLSTF.

Residue 137–142 coordinates ATP; that stretch reads GEGSGD.

The protein belongs to the AdoMet synthase 2 family. Mg(2+) serves as cofactor.

It carries out the reaction L-methionine + ATP + H2O = S-adenosyl-L-methionine + phosphate + diphosphate. The protein operates within amino-acid biosynthesis; S-adenosyl-L-methionine biosynthesis; S-adenosyl-L-methionine from L-methionine: step 1/1. Its function is as follows. Catalyzes the formation of S-adenosylmethionine from methionine and ATP. The polypeptide is S-adenosylmethionine synthase (Haloarcula marismortui (strain ATCC 43049 / DSM 3752 / JCM 8966 / VKM B-1809) (Halobacterium marismortui)).